The chain runs to 437 residues: Phosphomethylpyrimidine synthase (437 aa).

Substrate-binding positions include N69, M98, Y127, H163, 185 to 187 (SRG), 226 to 229 (DACR), and E265. H269 lines the Zn(2+) pocket. Y292 is a binding site for substrate. H333 is a Zn(2+) binding site. [4Fe-4S] cluster is bound by residues C409, C412, and C416.

It belongs to the ThiC family. [4Fe-4S] cluster serves as cofactor.

The catalysed reaction is 5-amino-1-(5-phospho-beta-D-ribosyl)imidazole + S-adenosyl-L-methionine = 4-amino-2-methyl-5-(phosphooxymethyl)pyrimidine + CO + 5'-deoxyadenosine + formate + L-methionine + 3 H(+). It functions in the pathway cofactor biosynthesis; thiamine diphosphate biosynthesis. Its function is as follows. Catalyzes the synthesis of the hydroxymethylpyrimidine phosphate (HMP-P) moiety of thiamine from aminoimidazole ribotide (AIR) in a radical S-adenosyl-L-methionine (SAM)-dependent reaction. This Clostridium novyi (strain NT) protein is Phosphomethylpyrimidine synthase.